The primary structure comprises 140 residues: MAIERTFSIIKPDATARNLTGAVNAVIEKAGLRIVAQKRIRMTKEQAETFYAVHKARPFFGELVEFMTSGPVVVQVLEGENAVAKYRDAMGATDPSKAAEGTIRKLYAKSIGENSAHGSDAPETAAIEIAQFFSGNEIVG.

Residues K11, F59, R87, T93, R104, and N114 each coordinate ATP. H117 serves as the catalytic Pros-phosphohistidine intermediate.

Belongs to the NDK family. Homotetramer. It depends on Mg(2+) as a cofactor.

The protein localises to the cytoplasm. The catalysed reaction is a 2'-deoxyribonucleoside 5'-diphosphate + ATP = a 2'-deoxyribonucleoside 5'-triphosphate + ADP. It catalyses the reaction a ribonucleoside 5'-diphosphate + ATP = a ribonucleoside 5'-triphosphate + ADP. In terms of biological role, major role in the synthesis of nucleoside triphosphates other than ATP. The ATP gamma phosphate is transferred to the NDP beta phosphate via a ping-pong mechanism, using a phosphorylated active-site intermediate. In Bradyrhizobium diazoefficiens (strain JCM 10833 / BCRC 13528 / IAM 13628 / NBRC 14792 / USDA 110), this protein is Nucleoside diphosphate kinase.